A 163-amino-acid polypeptide reads, in one-letter code: Phosphopantetheine adenylyltransferase (163 aa).

T10 contacts substrate. ATP contacts are provided by residues 10-11 (TF) and H18. Residues K42, L74, and R88 each contribute to the substrate site. ATP contacts are provided by residues 89 to 91 (GLR), E99, and 124 to 130 (NSFISST).

Belongs to the bacterial CoaD family. As to quaternary structure, homohexamer. Requires Mg(2+) as cofactor.

The protein localises to the cytoplasm. The enzyme catalyses (R)-4'-phosphopantetheine + ATP + H(+) = 3'-dephospho-CoA + diphosphate. It participates in cofactor biosynthesis; coenzyme A biosynthesis; CoA from (R)-pantothenate: step 4/5. Functionally, reversibly transfers an adenylyl group from ATP to 4'-phosphopantetheine, yielding dephospho-CoA (dPCoA) and pyrophosphate. The protein is Phosphopantetheine adenylyltransferase of Shewanella sp. (strain MR-4).